Consider the following 235-residue polypeptide: Ubiquinone/menaquinone biosynthesis C-methyltransferase UbiE (235 aa).

Residues Thr59, Asp84, and Ser123 each coordinate S-adenosyl-L-methionine.

It belongs to the class I-like SAM-binding methyltransferase superfamily. MenG/UbiE family.

It catalyses the reaction a 2-demethylmenaquinol + S-adenosyl-L-methionine = a menaquinol + S-adenosyl-L-homocysteine + H(+). The catalysed reaction is a 2-methoxy-6-(all-trans-polyprenyl)benzene-1,4-diol + S-adenosyl-L-methionine = a 5-methoxy-2-methyl-3-(all-trans-polyprenyl)benzene-1,4-diol + S-adenosyl-L-homocysteine + H(+). The protein operates within quinol/quinone metabolism; menaquinone biosynthesis; menaquinol from 1,4-dihydroxy-2-naphthoate: step 2/2. It functions in the pathway cofactor biosynthesis; ubiquinone biosynthesis. Functionally, methyltransferase required for the conversion of demethylmenaquinol (DMKH2) to menaquinol (MKH2) and the conversion of 2-polyprenyl-6-methoxy-1,4-benzoquinol (DDMQH2) to 2-polyprenyl-3-methyl-6-methoxy-1,4-benzoquinol (DMQH2). In Campylobacter jejuni subsp. jejuni serotype O:23/36 (strain 81-176), this protein is Ubiquinone/menaquinone biosynthesis C-methyltransferase UbiE.